A 59-amino-acid chain; its full sequence is Protein SspF (59 aa).

This sequence belongs to the alpha/beta-type SASP family.

May play some important role in either sporulation or the dormant spore. The chain is Protein SspF (sspF) from Bacillus cereus (strain ATCC 14579 / DSM 31 / CCUG 7414 / JCM 2152 / NBRC 15305 / NCIMB 9373 / NCTC 2599 / NRRL B-3711).